A 492-amino-acid polypeptide reads, in one-letter code: Catalase isozyme 2 (492 aa).

The tract at residues 1–32 is disordered; sequence MDPYKFRPSSSNDTPFWTTNAGDPVSNNNSSM. Residues 8–32 are compositionally biased toward polar residues; it reads PSSSNDTPFWTTNAGDPVSNNNSSM. Catalysis depends on residues His-65 and Asn-138. Tyr-348 contributes to the heme binding site.

The protein belongs to the catalase family. Homotetramer. It depends on heme as a cofactor. As to expression, abundant in hypocotyls and roots. Low levels are seen in the endosperms and cotyledons.

The protein localises to the peroxisome. It localises to the glyoxysome. The catalysed reaction is 2 H2O2 = O2 + 2 H2O. Occurs in almost all aerobically respiring organisms and serves to protect cells from the toxic effects of hydrogen peroxide. The polypeptide is Catalase isozyme 2 (CAT2) (Ricinus communis (Castor bean)).